Here is a 415-residue protein sequence, read N- to C-terminus: Lipid-A-disaccharide synthase (415 aa).

The tract at residues 1–21 (MNSLPESGSDGQSSADPSQKA) is disordered.

It belongs to the LpxB family.

The enzyme catalyses a lipid X + a UDP-2-N,3-O-bis[(3R)-3-hydroxyacyl]-alpha-D-glucosamine = a lipid A disaccharide + UDP + H(+). The protein operates within bacterial outer membrane biogenesis; LPS lipid A biosynthesis. Functionally, condensation of UDP-2,3-diacylglucosamine and 2,3-diacylglucosamine-1-phosphate to form lipid A disaccharide, a precursor of lipid A, a phosphorylated glycolipid that anchors the lipopolysaccharide to the outer membrane of the cell. This chain is Lipid-A-disaccharide synthase, found in Gluconobacter oxydans (strain 621H) (Gluconobacter suboxydans).